The chain runs to 151 residues: Zinc finger HIT domain-containing protein 3 (151 aa).

Residues C11, C14, C22, C25, C30, C34, H38, and C42 each coordinate Zn(2+). The segment at 11 to 42 (CVVCLEKPKYRCPTCRVPYCSVPCFQKHKEQC) adopts an HIT-type zinc-finger fold. A compositionally biased stretch (basic and acidic residues) spans 43-53 (SSEARPVEKRR). The tract at residues 43–81 (SSEARPVEKRRAGPPVRSEESKDDDSSVADFLNSDEEED) is disordered. The span at 63-81 (SKDDDSSVADFLNSDEEED) shows a compositional bias: acidic residues. S76 is modified (phosphoserine).

In terms of assembly, thyroid receptor interacting proteins (TRIPs) specifically interact with the ligand binding domain of the thyroid receptor (TR). Requires the presence of thyroid hormone for its interaction. Interacts with NUFIP1. Interacts (via HIT-type zinc finger) with the RUVBL1/RUVBL2 complex in the presence of ADP. Expressed in the cerebellum.

The protein resides in the cytoplasm. It localises to the nucleus. The polypeptide is Zinc finger HIT domain-containing protein 3 (Znhit3) (Mus musculus (Mouse)).